The sequence spans 75 residues: Transcription attenuation protein MtrB (75 aa).

The protein belongs to the MtrB family. Oligomer of 11 identical subunits arranged in doughnut-like structure.

In terms of biological role, required for transcription attenuation control in the Trp operon. This trans-acting factor seems to recognize a 10 bases nucleotide sequence in the Trp leader transcript causing transcription termination. Binds the leader RNA only in presence of L-tryptophan. The sequence is that of Transcription attenuation protein MtrB from Bacillus velezensis (strain DSM 23117 / BGSC 10A6 / LMG 26770 / FZB42) (Bacillus amyloliquefaciens subsp. plantarum).